Reading from the N-terminus, the 341-residue chain is ATP-dependent 6-phosphofructokinase 2 (341 aa).

ATP-binding positions include Gly10, 72–73, and 102–105; these read RL and GEGT. Glu103 contributes to the Mg(2+) binding site. Residues 125-127, Arg162, 169-171, Glu222, Lys266, and 272-275 each bind substrate; these read TID, MGR, and HVQR. Catalysis depends on Asp127, which acts as the Proton acceptor.

This sequence belongs to the phosphofructokinase type A (PFKA) family. Mixed-substrate PFK group III subfamily. In terms of assembly, homodimer or homotetramer. It depends on Mg(2+) as a cofactor.

Its subcellular location is the cytoplasm. It catalyses the reaction beta-D-fructose 6-phosphate + ATP = beta-D-fructose 1,6-bisphosphate + ADP + H(+). It functions in the pathway carbohydrate degradation; glycolysis; D-glyceraldehyde 3-phosphate and glycerone phosphate from D-glucose: step 3/4. Allosterically inhibited by phosphoenolpyruvate. Functionally, catalyzes the phosphorylation of D-fructose 6-phosphate to fructose 1,6-bisphosphate by ATP, the first committing step of glycolysis. This chain is ATP-dependent 6-phosphofructokinase 2, found in Streptomyces coelicolor (strain ATCC BAA-471 / A3(2) / M145).